We begin with the raw amino-acid sequence, 274 residues long: ATP synthase subunit a (274 aa).

A run of 5 helical transmembrane segments spans residues 43 to 63, 103 to 123, 144 to 164, 223 to 243, and 245 to 265; these read TLNI…LYVF, VIAP…VMDL, VVPT…FVLI, LIFI…LSLP, and AIFH…LTIV.

This sequence belongs to the ATPase A chain family. F-type ATPases have 2 components, CF(1) - the catalytic core - and CF(0) - the membrane proton channel. CF(1) has five subunits: alpha(3), beta(3), gamma(1), delta(1), epsilon(1). CF(0) has three main subunits: a(1), b(2) and c(9-12). The alpha and beta chains form an alternating ring which encloses part of the gamma chain. CF(1) is attached to CF(0) by a central stalk formed by the gamma and epsilon chains, while a peripheral stalk is formed by the delta and b chains.

It localises to the cell inner membrane. In terms of biological role, key component of the proton channel; it plays a direct role in the translocation of protons across the membrane. The sequence is that of ATP synthase subunit a from Photorhabdus laumondii subsp. laumondii (strain DSM 15139 / CIP 105565 / TT01) (Photorhabdus luminescens subsp. laumondii).